A 488-amino-acid chain; its full sequence is Intron-encoded DNA endonuclease I-AniI (488 aa).

The interval 1 to 169 (MRILKSHPLL…DIVEFIWGGL (169 aa)) is cobA exon 1 encoded. The cobA intron encoded stretch occupies residues 170-488 (YTDEPQCGDV…SEKIKIPSNY (319 aa)).

This sequence in the C-terminal section; belongs to the LAGLIDADG endonuclease family. As to quaternary structure, homodimer. Mg(2+) serves as cofactor. In terms of processing, the mature protein may arise from proteolytic cleavage of an in-frame translation of cobA exon 1 plus intron, containing the I-AniI open reading frame. Cleavage may take place close to Met-213 resulting in an active endonuclease/maturase of about 30 kDa.

Its subcellular location is the mitochondrion. Mitochondrial DNA endonuclease and mRNA maturase involved in intron homing and required for splicing of the cytochrome b (cobA) gene intron, containing its own coding sequence. The protein stimulates the intrinsic ribozyme activity of the intron through binding to and stabilizing specific secondary and tertiary structure elements in the RNA. As an endonuclease it introduces a specific double-strand break at the junction of the two exons the cobA gene and thus mediates the insertion of an intron, containing its own coding sequence (group I intron), into an intronless gene. Recognizes with limited specificity and cleaves the sequence 5'-GAGGAGGTTTCTCTGTA-3'. The proteins RNA and DNA recognition and binding surfaces are independent. This Emericella nidulans (Aspergillus nidulans) protein is Intron-encoded DNA endonuclease I-AniI (I-AniI).